Reading from the N-terminus, the 87-residue chain is Putative regulatory protein ABC2323 (87 aa).

The protein belongs to the RemA family.

In Shouchella clausii (strain KSM-K16) (Alkalihalobacillus clausii), this protein is Putative regulatory protein ABC2323.